The following is a 237-amino-acid chain: ATP synthase subunit a (237 aa).

The next 4 helical transmembrane spans lie at 17 to 37 (LSDMLMITITCLIVFIIAVAA), 78 to 98 (LGVTLIMYVFVANMLGLPFWL), 178 to 198 (ILLGLLASLGTHYGVLGCGSI), and 201 to 221 (MVIMVWQAFSIFVGTIQAFIF).

It belongs to the ATPase A chain family. As to quaternary structure, F-type ATPases have 2 components, CF(1) - the catalytic core - and CF(0) - the membrane proton channel. CF(1) has five subunits: alpha(3), beta(3), gamma(1), delta(1), epsilon(1). CF(0) has three main subunits: a(1), b(2) and c(9-12). The alpha and beta chains form an alternating ring which encloses part of the gamma chain. CF(1) is attached to CF(0) by a central stalk formed by the gamma and epsilon chains, while a peripheral stalk is formed by the delta and b chains.

It is found in the cell membrane. Its function is as follows. Key component of the proton channel; it plays a direct role in the translocation of protons across the membrane. The chain is ATP synthase subunit a from Bacillus caldotenax.